The primary structure comprises 240 residues: Transcriptional regulatory protein BaeR (240 aa).

Residues 12–125 (RILIVEDEPK…EVVARVKTIL (114 aa)) enclose the Response regulatory domain. D61 carries the 4-aspartylphosphate modification. The segment at residues 131-234 (QRELQQQDAE…VYGVGYRWEA (104 aa)) is a DNA-binding region (ompR/PhoB-type).

In terms of processing, phosphorylated by BaeS.

It localises to the cytoplasm. Functionally, member of the two-component regulatory system BaeS/BaeR. Activates the mdtABCD operon. This Escherichia coli O6:H1 (strain CFT073 / ATCC 700928 / UPEC) protein is Transcriptional regulatory protein BaeR (baeR).